The chain runs to 499 residues: Endoglucanase (499 aa).

Positions 1-29 (MKRSISIFITCLLIAVLTMGGLLPSPASA) are cleaved as a signal peptide. Substrate contacts are provided by residues His-65, 69 to 70 (WY), Tyr-96, and His-131. The Proton donor role is filled by Glu-169. Tyr-231 lines the substrate pocket. Glu-257 serves as the catalytic Nucleophile. Substrate contacts are provided by residues 263–264 (AS), Trp-291, and 296–298 (KQE). The span at 330-340 (RGTKDSTKDVP) shows a compositional bias: basic and acidic residues. The disordered stretch occupies residues 330–353 (RGTKDSTKDVPETPAQDNPTQEKG). Residues 350–499 (QEKGVSVQYK…GKLIWGTEPN (150 aa)) enclose the CBM3 domain.

It belongs to the glycosyl hydrolase 5 (cellulase A) family.

The catalysed reaction is Endohydrolysis of (1-&gt;4)-beta-D-glucosidic linkages in cellulose, lichenin and cereal beta-D-glucans.. The sequence is that of Endoglucanase (bglC) from Bacillus subtilis.